The primary structure comprises 662 residues: Serine/threonine kinase-like domain-containing protein STKLD1 (662 aa).

The Protein kinase domain occupies 1-202; that stretch reads MLNPGALGVN…ILDMATCSFL (202 aa). ATP-binding positions include 2–10 and K25; that span reads LNPGALGVN. Residues 639-662 are disordered; that stretch reads LQEDQLEPPAGQEAPLQGEPLFRP.

It belongs to the protein kinase superfamily. Ser/Thr protein kinase family. STKL subfamily.

The polypeptide is Serine/threonine kinase-like domain-containing protein STKLD1 (Stkld1) (Mus musculus (Mouse)).